The following is a 173-amino-acid chain: Dual-action ribosomal maturation protein DarP (173 aa).

This sequence belongs to the DarP family.

It is found in the cytoplasm. Functionally, member of a network of 50S ribosomal subunit biogenesis factors which assembles along the 30S-50S interface, preventing incorrect 23S rRNA structures from forming. Promotes peptidyl transferase center (PTC) maturation. This is Dual-action ribosomal maturation protein DarP from Pseudomonas fluorescens (strain ATCC BAA-477 / NRRL B-23932 / Pf-5).